Reading from the N-terminus, the 41-residue chain is uncharacterized protein (41 aa).

A helical transmembrane segment spans residues 10–32 (LIILAVPFMIKTSLKTNLIFFFL).

The protein resides in the cell inner membrane. This is an uncharacterized protein from Escherichia coli (strain K12).